The following is a 274-amino-acid chain: Protein YeeZ (274 aa).

Positions 1–24 are cleaved as a signal peptide; it reads MKKVAIVGLGWLGMPLAMSLSARG. ATP is bound at residue 170-177; sequence GRFFAGKT.

This Escherichia coli O157:H7 protein is Protein YeeZ (yeeZ).